A 1867-amino-acid chain; its full sequence is MFDYNQLNKLKDKIQSSDGLQIKDRTYLYKTYRSVFVGYECVDWIFGNCPDIKTREDAIKLGQTLFDAGIICNVTSGADPIFKDDYIFYQFDNNKNNNNINNNNNNATSTATTATAPITPVSTKIGSIGKSSSKSSTAVDKMNNNNNNNNNNNNNNNNNNNNNSNNSNSNNNSSRRTSSVPPPVLVTASLSSSTSSSSSSTTSTSSSLASTNTNSNSTYNSNSFNKKHHRYSINELSKVVLEDLNTVTLVKDELIQLSQELMNGDKGLKLQKKKKGAAGTTISCFSGSQLIDWLVKKLEVTRKESIQIASALMHLNIFIEVGTIFNSSNNNNNNNNGGGGVMSSTLSTTIPSSISLQQLSNQSQSNSNSSSSSSILNLSFTAPISISSTTATMSSSLSLSTTAATTTTTTTSSSLLNNSSSGSGFLVPTLPASVLNSSSNSNNQLYSSSPLSLSTSSIPAFDNRIVEDCGNVFYEFLTKPEAIINHVAMRRLDDLCLTHKCISIIPTTIINTSKFLRIIDLSFNQLSESNQLESIATLYNLESCNLSHNQLSTLPSSFSRLELLTKLILSHNCFQVIPNVVFQLSNLEELSLAANQLSSISESIGSLKSLEKLDLSFNKQINKIPKELGLLVRLKSLNVLGSNKINELPSFLSTLPLLEQLDFSRDIIKSPPKEITSKGFTHIIGYLKDLFEGTETLSHIKLMVLGSEKTGRSSLVKALTKSQTKSLSRQSANFLKKVTSSEVSLNDPIEIIQLKLDLPPEQQNGIMTSSSNLNLSTGTLPPPTQLSSSTSELKPQRKDSFGSSMTTPEKKRPTKRNVKLMIYDFRMPSIDVYYHTHQFFLSERAFYLVTYDINKDLSHSGLEFWVESIKKKAPNAPIYIVATHIDTFNQYGGDILVPLNEIDQYLTQRSLEVTGVIGVSSTTLRNIDLLKNEIIQTLLNQSNNNNNNNNNNNYNNNKQSNSISTTNWLNERIPSIYITLETNLQEEAKKRPIVTWDEYQNIAKLSNFTTSSYEKLVRATNTLNRWGSIIWFEDSKSSLKDFVILDPQWFSDCFYKLLLAKHSFINSDGILLLSNLKNIWKPNIVPEQFHIKLLKLLERYQILYTLKNNSNLQQLQQQQQQQKSFGNLSKENSLNSMSYSIESRSSSSPLPTVVTLSAEISSSPSLSLSNSSQSVFTNPNNNNNNKSEQQQQQQQQQQQPQPISTSPKLLRNSLKNLKSIENNSSSLSNNSILNSNSNSSGNLLQNGSYISFNRIIIPCLLPNGKPSHLASLWDTWSGEDEHQIGRYYQFRNISAKNCFERVMVRFLYMMEPIVYWSTGILFRKTQTYRENIKDSMSSCGTLVEFDTVTQQLQIRVRGHEFDACAKLFQIVLENVDTILKDYQINQSQTYIPCSCSCECRDLPHLFPIDLIEETFGKGESHTKCPITMKLVSLCKISPDITLSSVSSNKKVSKEDLIYQEEIGVGGFSRVYKGIYKNNTVAIKQFNFERMDLIDSTSFNNLNSLTISPSNSSLSISLSSSTSSLSPPIVNNNNNNNNLNNNLNNLNNNNKLYIQQQQQTQQNQQQQQQQQQQQQQQQQQQQQQQQQQQQQQQQQQQQNQQQPKILQRNLSTSSLSSNSSQGEDSMNQISSGKLNAINEFRREVWLMSGLSHSNIVLMKGFCFEPYAIVMEYMDIGSLSSFLKKKKEDGQVLDWQMLLKIVTDIASGMAFLHNITPPLVHRDLKSPNILLASHPTNPNEISAKVSDFGLSRSIVQNFSSKVVDNPTWQSPEVLKGMEYNEKSDIYSFGMILWECYHLELPFDEFDFKFMSTLEDNILSGLRPSINQNCNRMYSSLITKCWNADPNLRPSFNSILKTLNEIKDSTINSK.

Residues 16–93 (SSDGLQIKDR…DDYIFYQFDN (78 aa)) form the DEP 1 domain. Disordered stretches follow at residues 96 to 115 (NNNN…TTAT) and 121 to 225 (VSTK…NSFN). Over residues 121-223 (VSTKIGSIGK…NSNSTYNSNS (103 aa)) the composition is skewed to low complexity. The 79-residue stretch at 264-342 (GDKGLKLQKK…NNNNGGGGVM (79 aa)) folds into the DEP 2 domain. LRR repeat units lie at residues 491 to 512 (RLDD…IINT), 515 to 536 (FLRI…ESIA), 540 to 561 (NLES…FSRL), 563 to 584 (LLTK…VFQL), 586 to 607 (NLEE…IGSL), 609 to 631 (SLEK…LGLL), 633 to 656 (RLKS…STLP), and 657 to 678 (LLEQ…ITSK). Residues 693–941 (GTETLSHIKL…NEIIQTLLNQ (249 aa)) form the Roc domain. 2 disordered regions span residues 763–813 (QNGI…KKRP) and 942–961 (SNNN…KQSN). Positions 768-793 (TSSSNLNLSTGTLPPPTQLSSSTSEL) are enriched in low complexity. In terms of domain architecture, COR spans 974 to 1111 (PSIYITLETN…ILYTLKNNSN (138 aa)). The tract at residues 1163-1207 (SPSLSLSNSSQSVFTNPNNNNNNKSEQQQQQQQQQQQPQPISTSP) is disordered. Positions 1456 to 1864 (LIYQEEIGVG…TLNEIKDSTI (409 aa)) constitute a Protein kinase domain. Residues 1462–1470 (IGVGGFSRV) and Lys-1483 each bind ATP. The disordered stretch occupies residues 1509–1546 (SNSSLSISLSSSTSSLSPPIVNNNNNNNNLNNNLNNLN). Asp-1721 serves as the catalytic Proton acceptor.

The protein belongs to the protein kinase superfamily. TKL Ser/Thr protein kinase family. ROCO subfamily.

It carries out the reaction L-seryl-[protein] + ATP = O-phospho-L-seryl-[protein] + ADP + H(+). The catalysed reaction is L-threonyl-[protein] + ATP = O-phospho-L-threonyl-[protein] + ADP + H(+). This Dictyostelium discoideum (Social amoeba) protein is Probable serine/threonine-protein kinase roco8 (roco8).